The chain runs to 323 residues: Acetyl-coenzyme A carboxylase carboxyl transferase subunit alpha (323 aa).

One can recognise a CoA carboxyltransferase C-terminal domain in the interval 39–293 (RLSKKSQQLT…RRALGDSLRQ (255 aa)).

Belongs to the AccA family. As to quaternary structure, acetyl-CoA carboxylase is a heterohexamer composed of biotin carboxyl carrier protein (AccB), biotin carboxylase (AccC) and two subunits each of ACCase subunit alpha (AccA) and ACCase subunit beta (AccD).

The protein localises to the cytoplasm. It carries out the reaction N(6)-carboxybiotinyl-L-lysyl-[protein] + acetyl-CoA = N(6)-biotinyl-L-lysyl-[protein] + malonyl-CoA. It functions in the pathway lipid metabolism; malonyl-CoA biosynthesis; malonyl-CoA from acetyl-CoA: step 1/1. Functionally, component of the acetyl coenzyme A carboxylase (ACC) complex. First, biotin carboxylase catalyzes the carboxylation of biotin on its carrier protein (BCCP) and then the CO(2) group is transferred by the carboxyltransferase to acetyl-CoA to form malonyl-CoA. The chain is Acetyl-coenzyme A carboxylase carboxyl transferase subunit alpha from Burkholderia pseudomallei (strain 1106a).